Reading from the N-terminus, the 66-residue chain is UPF0337 protein SpyM3_0896 (66 aa).

The protein belongs to the UPF0337 (CsbD) family.

The chain is UPF0337 protein SpyM3_0896 from Streptococcus pyogenes serotype M3 (strain ATCC BAA-595 / MGAS315).